A 77-amino-acid chain; its full sequence is Small nuclear ribonucleoprotein G (77 aa).

The Sm domain occupies 4-76 (AGAPDLKKYL…VIMIETLDKM (73 aa)).

The protein belongs to the snRNP Sm proteins family. As to quaternary structure, belongs to the 40S cdc5-associated complex (or cwf complex), a spliceosome sub-complex reminiscent of a late-stage spliceosome composed of the U2, U5 and U6 snRNAs and at least brr2, cdc5, cwf2/prp3, cwf3/syf1, cwf4/syf3, cwf5/ecm2, spp42/cwf6, cwf7/spf27, cwf8, cwf9, cwf10, cwf11, cwf12, prp45/cwf13, cwf14, cwf15, cwf16, cwf17, cwf18, cwf19, cwf20, cwf21, cwf22, cwf23, cwf24, cwf25, cwf26, cyp7/cwf27, cwf28, cwf29/ist3, lea1, msl1, prp5/cwf1, prp10, prp12/sap130, prp17, prp22, sap61, sap62, sap114, sap145, slu7, smb1, smd1, smd3, smf1, smg1 and syf2.

The protein resides in the nucleus. Its subcellular location is the cytoplasm. Its function is as follows. Plays a role in pre-mRNA splicing as a core component of the spliceosomal U1, U2, U4 and U5 small nuclear ribonucleoproteins (snRNPs), the building blocks of the spliceosome. The protein is Small nuclear ribonucleoprotein G (smg1) of Schizosaccharomyces pombe (strain 972 / ATCC 24843) (Fission yeast).